A 909-amino-acid polypeptide reads, in one-letter code: Villin-1 (909 aa).

Gelsolin-like repeat units lie at residues 29-79 (KQLI…VDSI), 149-189 (VRVK…QEKA), 262-305 (GNLH…TERK), 391-448 (LKVW…QDRA), 529-569 (MQAI…SDHE), and 631-672 (LKVK…KSKE). 2 disordered regions span residues 733–781 (SLKG…CSSE) and 816–835 (DGVARQESSSKSDISKQKPR). Residues 752 to 762 (QSKDNASRDLQ) show a composition bias toward basic and acidic residues. Position 780 is a phosphoserine (Ser-780). The HP domain maps to 844-909 (SLESLAYSYE…NKLKISLHLF (66 aa)).

It belongs to the villin/gelsolin family. As to expression, expressed in all tissues examined. Mainly detected in the vascular tissue and the pericycle of roots and in the vasculature of leaves. Not expressed in the root cap.

Its subcellular location is the cytoplasm. It localises to the cytoskeleton. In terms of biological role, binds actin and actin filament bundles in a Ca(2+)/calmodulin-insensitive manner, but is unable to sever, cap, and nucleate actin filament formation in vitro. Does not protect individual filaments from severing by VLN3 (AC O81645). This is Villin-1 from Arabidopsis thaliana (Mouse-ear cress).